The sequence spans 431 residues: UDP-N-acetylmuramate--L-alanine ligase (431 aa).

108 to 114 contributes to the ATP binding site; the sequence is GSHGKTS.

Belongs to the MurCDEF family.

Its subcellular location is the cytoplasm. The catalysed reaction is UDP-N-acetyl-alpha-D-muramate + L-alanine + ATP = UDP-N-acetyl-alpha-D-muramoyl-L-alanine + ADP + phosphate + H(+). It participates in cell wall biogenesis; peptidoglycan biosynthesis. Cell wall formation. This Macrococcus caseolyticus (strain JCSC5402) (Macrococcoides caseolyticum) protein is UDP-N-acetylmuramate--L-alanine ligase.